The following is a 42-amino-acid chain: Crotamine Ile-19 (42 aa).

3 disulfides stabilise this stretch: C4-C36, C11-C30, and C18-C37.

It belongs to the crotamine-myotoxin family. In terms of assembly, monomer. As to expression, expressed by the venom gland.

Its subcellular location is the secreted. Its function is as follows. Cationic peptide that possesses multiple functions. It acts as a cell-penetrating peptide (CPP), and as a potent voltage-gated potassium channel (Kv) inhibitor, it induces severe muscle necrosis by a non-enzymatic mechanism and exhibits antimicrobial activities. It also elicits a short-lasting hyperextension of the hind limb. It does not cause observable tissue damage (whereas the whole venom causes severe myonecrosis accompanied by edema and hemorrhage). In Crotalus durissus ruruima (South American rattlesnake), this protein is Crotamine Ile-19.